The sequence spans 341 residues: S-adenosylmethionine:tRNA ribosyltransferase-isomerase (341 aa).

This sequence belongs to the QueA family. As to quaternary structure, monomer.

It localises to the cytoplasm. It carries out the reaction 7-aminomethyl-7-carbaguanosine(34) in tRNA + S-adenosyl-L-methionine = epoxyqueuosine(34) in tRNA + adenine + L-methionine + 2 H(+). The protein operates within tRNA modification; tRNA-queuosine biosynthesis. In terms of biological role, transfers and isomerizes the ribose moiety from AdoMet to the 7-aminomethyl group of 7-deazaguanine (preQ1-tRNA) to give epoxyqueuosine (oQ-tRNA). The polypeptide is S-adenosylmethionine:tRNA ribosyltransferase-isomerase (Clostridium perfringens (strain ATCC 13124 / DSM 756 / JCM 1290 / NCIMB 6125 / NCTC 8237 / Type A)).